The following is a 129-amino-acid chain: Serum amyloid A protein (129 aa).

The signal sequence occupies residues 1–18; it reads MKLFTGLVFCSLVLGVSS. Gln19 carries the pyrrolidone carboxylic acid modification. A disordered region spans residues 88 to 129; sequence FFRHGNSGHGAEDSKADQAANEWGRSGKDPNHFRPAGLPSKY. The propeptide at 112–129 is often cleaved during amyloidogenesis; the sequence is RSGKDPNHFRPAGLPSKY.

This sequence belongs to the SAA family. Expressed by the liver; secreted in plasma.

The protein localises to the secreted. In terms of biological role, major acute phase reactant. Apolipoprotein of the HDL complex. The chain is Serum amyloid A protein (SAA1) from Felis catus (Cat).